The chain runs to 233 residues: Translation initiation factor IF-3 (233 aa).

Disordered regions lie at residues 1-21 (MAIQHRDPRGGGGSRDARTNR) and 184-233 (LQSQ…AAQR). Residues 193-211 (AAAAAAPAAAPAAPAAGAP) show a composition bias toward low complexity. Residues 212–223 (APAPAPAAPAPA) are compositionally biased toward pro residues. Over residues 224 to 233 (PAAADPAAQR) the composition is skewed to low complexity.

The protein belongs to the IF-3 family. In terms of assembly, monomer.

It is found in the cytoplasm. Its function is as follows. IF-3 binds to the 30S ribosomal subunit and shifts the equilibrium between 70S ribosomes and their 50S and 30S subunits in favor of the free subunits, thus enhancing the availability of 30S subunits on which protein synthesis initiation begins. The chain is Translation initiation factor IF-3 from Anaeromyxobacter dehalogenans (strain 2CP-C).